Reading from the N-terminus, the 2209-residue chain is RNA-directed RNA polymerase L (2209 aa).

The segment at 26–284 is endonuclease; it reads KVTFLSQVHP…AHLDSDVSSC (259 aa). Residues Glu51, Asp89, and Glu102 each coordinate Mn(2+). Lys115 is an active-site residue. The 198-residue stretch at 1172–1369 folds into the RdRp catalytic domain; sequence CDMKMAVNNG…FLSSKLNKFV (198 aa). A Mg(2+)-binding site is contributed by Asp1330.

It belongs to the Bunyavirales RNA polymerase family. Homomultimer; the oligomeric structure is essential for the polymerase activity. Interacts with nucleoprotein N. Interacts with protein Z; this interaction inhibits viral transcription and replication, Z partially blocks the product exit tunnel for the releasing nascent RNA product. The cofactor is Mn(2+). Mg(2+) serves as cofactor.

It localises to the virion. It is found in the host cytoplasm. It catalyses the reaction RNA(n) + a ribonucleoside 5'-triphosphate = RNA(n+1) + diphosphate. Its function is as follows. RNA-dependent RNA polymerase, which is responsible for the replication and transcription of the viral RNA genome using antigenomic RNA as an intermediate. During transcription, synthesizes subgenomic RNAs and assures their capping by a cap-snatching mechanism, which involves the endonuclease activity cleaving the host capped pre-mRNAs. These short capped RNAs are then used as primers for viral transcription. The 3'-end of subgenomic mRNAs molecules are heterogeneous and not polyadenylated. The replicase function is to direct synthesis of antigenomic and genomic RNA which are encapsidated and non capped. As a consequence of the use of the same enzyme for both transcription and replication, these mechanisms need to be well coordinated. These processes may be regulated by proteins N and Z in a dose-dependent manner. Z protein inhibits the viral polymerase L und thus the viral transcription and RNA synthesis. This chain is RNA-directed RNA polymerase L, found in Calomys callosus (Large vesper mouse).